The following is a 277-amino-acid chain: B3 domain-containing protein At3g19184 (277 aa).

The disordered stretch occupies residues 33–94 (QSLRVSSSSS…LERRPRRSSR (62 aa)). The segment at residues 130 to 221 (FTKPMLQSHV…TFKVYIIRVN (92 aa)) is a DNA-binding region (TF-B3). The segment covering 224-250 (ANNDSDGNEVNDDDSDGNEEDRDNDNE) has biased composition (acidic residues). A disordered region spans residues 224–277 (ANNDSDGNEVNDDDSDGNEEDRDNDNESNEKQKETVSEGRQLRSSGKRKRRGRK). The segment covering 251 to 264 (SNEKQKETVSEGRQ) has biased composition (basic and acidic residues). The span at 268–277 (SGKRKRRGRK) shows a compositional bias: basic residues.

It localises to the nucleus. The chain is B3 domain-containing protein At3g19184 from Arabidopsis thaliana (Mouse-ear cress).